The primary structure comprises 617 residues: Isopropyl malate synthase gloH (617 aa).

Positions Pro47–Leu325 constitute a Pyruvate carboxyltransferase domain.

Belongs to the alpha-IPM synthase/homocitrate synthase family. LeuA type 2 subfamily.

It catalyses the reaction 3-methyl-2-oxobutanoate + acetyl-CoA + H2O = (2S)-2-isopropylmalate + CoA + H(+). Its pathway is mycotoxin biosynthesis. In terms of biological role, 2-isopropylmalate synthase; part of the gene cluster that mediates the biosynthesis of pneumocandins, lipohexapeptides of the echinocandin family that prevent fungal cell wall formation by non-competitive inhibition of beta-1,3-glucan synthase. The 10,12-dimethylmyristoyl side chain is synthesized by the reducing polyketide synthase gloL/GLPKS4. The thioesterase gloN/GLHYD exclusively interacts with gloL/GLPKS4 to maintain turnover of the polyketide side chain. The 10R,12S-dimethylmyristic acid is then transferred to the first thiolation domain of the nonribosomal peptide synthetase gloA/GLNRPS4 by the acyl-AMP ligase gloD/GLligase, followed by its acylation to L-ornithine to trigger elongation of the cyclic hexapeptide. L-ornithine, 4R-hydroxyl-L-proline (generated from L-proline by the dioxygenase gloF/GLOXY2), 3S-hydroxyl-L-homotyrosine (generated by gloG/GLHtyB, gloH/GLHtyA, gloI/GLHtyC, gloJ/GLHtyD and hydroxylated at C-3 by the dioxygenase gloM/GLOXY1), 3R-hydroxyl-L-glutamine (generated from L-glutamine probably by the dioxygenase gloE/GLOXY3) and 3S-hydroxyl-L-proline (generated from L-proline by the dioxygenase gloF/GLOXY2 to yield pneumocandin B0), or 3S-hydroxyl-4S-methyl-L-proline (generated from L-leucine by the dioxygenase gloC/GLOXY4 to yield pneumocandin A0) are sequentially added to the growing chain. The last C domain of gloA/GLNRPS4 is proposed to be responsible for cyclization by condensation to form the peptide bond between L-ornithine and 3S-hydroxyl-4S-methyl-L-proline (for pneumocandin A0) or 3S-hydroxyl-L-proline (for pneumocandin B0). Finally, the subsequent C-4 hydroxylation of 3S-hydroxyl-L-homotyrosine and L-ornithine dihydroxylation at C-4 and C-5 are performed by the cytochrome P450 monooxygenases gloP/GLP450-1 and gloO/GLP450-2, respectively. The chain is Isopropyl malate synthase gloH from Glarea lozoyensis (strain ATCC 20868 / MF5171).